The chain runs to 323 residues: Vertebrate ancient opsin (323 aa).

The Extracellular portion of the chain corresponds to 1-38; it reads MDTLRIAVNGVSYNEASEIYKPHADPFTGPITNLAPWN. Residues 39-63 form a helical membrane-spanning segment; the sequence is FAVLATLMFVITSLSLFENFTVMLA. The Cytoplasmic segment spans residues 64 to 75; that stretch reads TYKFKQLRQPLN. Residues 76–100 form a helical membrane-spanning segment; the sequence is YIIVNLSLADFLVSLTGGTISFLTN. At 101–115 the chain is on the extracellular side; sequence ARGYFFLGNWACVLE. An intrachain disulfide couples Cys112 to Cys189. Residues 116-135 form a helical membrane-spanning segment; the sequence is GFAVTYFGIVAMWSLAVLSF. Residues 136–154 lie on the Cytoplasmic side of the membrane; that stretch reads ERYFVICRPLGNVRLRGKH. Residues 155–178 traverse the membrane as a helical segment; that stretch reads AALGLLFVWTFSFIWTIPPVFGWC. The Extracellular segment spans residues 179–202; sequence SYTVSKIGTTCEPNWYSNNIWNHT. Asn200 carries an N-linked (GlcNAc...) asparagine glycan. A helical membrane pass occupies residues 203 to 230; that stretch reads YIITFFVTCFIMPLGMIIYCYGKLLQKL. Residues 231–250 are Cytoplasmic-facing; sequence RKVSHDRLGNAKKPERQVSR. The helical transmembrane segment at 251-274 threads the bilayer; it reads MVVVMIVAYLVGWTPYAAFSIIVT. At 275–282 the chain is on the extracellular side; it reads ACPTIYLD. Residues 283-307 form a helical membrane-spanning segment; it reads PRLAAAPAFFSKTAAVYNPVIYVFM. An N6-(retinylidene)lysine modification is found at Lys294. At 308–323 the chain is on the cytoplasmic side; sequence NKQVSTQLNWGFWSRA.

The protein belongs to the G-protein coupled receptor 1 family. Opsin subfamily. In terms of processing, phosphorylated on some or all of the serine and threonine residues present in the C-terminal region.

Its subcellular location is the membrane. This chain is Vertebrate ancient opsin, found in Salmo salar (Atlantic salmon).